Reading from the N-terminus, the 248-residue chain is Triosephosphate isomerase A (248 aa).

2 residues coordinate substrate: asparagine 11 and lysine 13. Residue histidine 95 is the Electrophile of the active site. Glutamate 165 acts as the Proton acceptor in catalysis.

It belongs to the triosephosphate isomerase family. Homodimer.

It is found in the cytoplasm. The catalysed reaction is dihydroxyacetone phosphate = methylglyoxal + phosphate. The enzyme catalyses D-glyceraldehyde 3-phosphate = dihydroxyacetone phosphate. The protein operates within carbohydrate degradation; glycolysis; D-glyceraldehyde 3-phosphate from glycerone phosphate: step 1/1. Its pathway is carbohydrate biosynthesis; gluconeogenesis. Its function is as follows. Triosephosphate isomerase is an extremely efficient metabolic enzyme that catalyzes the interconversion between dihydroxyacetone phosphate (DHAP) and D-glyceraldehyde-3-phosphate (G3P) in glycolysis and gluconeogenesis. It is also responsible for the non-negligible production of methylglyoxal a reactive cytotoxic side-product that modifies and can alter proteins, DNA and lipids. The chain is Triosephosphate isomerase A (tpi1a) from Danio rerio (Zebrafish).